The sequence spans 333 residues: Adenosine deaminase (333 aa).

Zn(2+)-binding residues include histidine 12 and histidine 14. The substrate site is built by histidine 14, aspartate 16, and glycine 170. Histidine 197 provides a ligand contact to Zn(2+). The Proton donor role is filled by glutamate 200. Aspartate 278 provides a ligand contact to Zn(2+). Aspartate 279 lines the substrate pocket.

Belongs to the metallo-dependent hydrolases superfamily. Adenosine and AMP deaminases family. Adenosine deaminase subfamily. The cofactor is Zn(2+).

It carries out the reaction adenosine + H2O + H(+) = inosine + NH4(+). The catalysed reaction is 2'-deoxyadenosine + H2O + H(+) = 2'-deoxyinosine + NH4(+). In terms of biological role, catalyzes the hydrolytic deamination of adenosine and 2-deoxyadenosine. The polypeptide is Adenosine deaminase (Aliivibrio fischeri (strain ATCC 700601 / ES114) (Vibrio fischeri)).